A 734-amino-acid chain; its full sequence is Methionine--tRNA ligase (734 aa).

The short motif at 12-22 (PYVNNIPHLGN) is the 'HIGH' region element. 4 residues coordinate Zn(2+): cysteine 143, cysteine 146, cysteine 155, and cysteine 158. The 'KMSKS' region signature appears at 330–334 (KFSKS). Residue lysine 333 participates in ATP binding. The 106-residue stretch at 570 to 675 (FREKVLLRVV…QNPIAGERII (106 aa)) folds into the tRNA-binding domain.

It belongs to the class-I aminoacyl-tRNA synthetase family. MetG type 1 subfamily. Homodimer. Zn(2+) serves as cofactor.

It localises to the cytoplasm. It catalyses the reaction tRNA(Met) + L-methionine + ATP = L-methionyl-tRNA(Met) + AMP + diphosphate. Its function is as follows. Is required not only for elongation of protein synthesis but also for the initiation of all mRNA translation through initiator tRNA(fMet) aminoacylation. The chain is Methionine--tRNA ligase from Borreliella burgdorferi (strain ZS7) (Borrelia burgdorferi).